The primary structure comprises 315 residues: tRNA-dihydrouridine(16) synthase (315 aa).

Residues 7–9 and Gln-68 contribute to the FMN site; that span reads PME. The active-site Proton donor is Cys-98. Residues Lys-139, 200–202, and 224–225 contribute to the FMN site; these read NGE and GR.

The protein belongs to the Dus family. DusC subfamily. The cofactor is FMN.

The catalysed reaction is 5,6-dihydrouridine(16) in tRNA + NADP(+) = uridine(16) in tRNA + NADPH + H(+). The enzyme catalyses 5,6-dihydrouridine(16) in tRNA + NAD(+) = uridine(16) in tRNA + NADH + H(+). In terms of biological role, catalyzes the synthesis of 5,6-dihydrouridine (D), a modified base found in the D-loop of most tRNAs, via the reduction of the C5-C6 double bond in target uridines. DusC specifically modifies U16 in tRNAs. The polypeptide is tRNA-dihydrouridine(16) synthase (Escherichia coli (strain K12)).